The primary structure comprises 206 residues: MAEDADMRNELEEMQRRADQLADESLESTRRMLQLVEESKDAGIRTLVMLDEQGEQLERIEEGMDQINKDMKEAEKNSTDLGKFCGLCVCPCNKLKSSDAYKKAWGNNQDGVVASQPARVVDEREQMAISGGFIRRVTNDARENEMDENLEQVSGIIGNLRHMALDMGNEIDTQNRQIDRIMEKADSNKTRIDEANQRATKMLGSG.

Residues 1 to 20 (MAEDADMRNELEEMQRRADQ) show a composition bias toward basic and acidic residues. The tract at residues 1–25 (MAEDADMRNELEEMQRRADQLADES) is disordered. An interaction with CENPF region spans residues 1–75 (MAEDADMRNE…QINKDMKEAE (75 aa)). One can recognise a t-SNARE coiled-coil homology 1 domain in the interval 19–81 (DQLADESLES…KEAEKNSTDL (63 aa)). Residues Cys-85, Cys-88, Cys-90, and Cys-92 are each lipidated (S-palmitoyl cysteine). Residues 111–120 (GVVASQPARV) are interaction with ZDHHC17. Phosphothreonine is present on Thr-138. The t-SNARE coiled-coil homology 2 domain occupies 140–202 (DARENEMDEN…DEANQRATKM (63 aa)). Ser-154 and Ser-187 each carry phosphoserine.

This sequence belongs to the SNAP-25 family. As to quaternary structure, part of the SNARE core complex containing SNAP25, VAMP2 and STX1A; this complex binds CPLX1. Found in a complex containing SYT1, SV2B and syntaxin-1. Found in a ternary complex with STX1A and VAMP8. Interacts with HSC70 and with SYT9, forming a complex with DNAJC5. The interaction with SYT9 is inhibited in presence of calcium. Isoform 1 and isoform 2 interact with BLOC1S6. Interacts with CENPF. Interacts with EQTN. Interacts with HGS. Interacts with KCNB1 (via N-terminus); reduces the voltage-dependent potassium channel KCNB1 activity in pancreatic beta cells. Interacts with OTOF. Interacts with RIMS1. Interacts with SNAPIN. Interacts with STXBP6. Interacts with TRIM9. Interacts with ZDHHC13 (via ANK repeats). Interacts with ZDHHC17 (via ANK repeats). Associates with the BLOC-1 complex. Interacts with PLCL1 (via C2 domain). Interacts with PRRT2; this interaction may impair the formation of the SNARE complex. Interacts with alpha-synuclein/SNCA. Interacts with PRPH2. Interacts with ROM1. Interacts with STX3. Post-translationally, palmitoylated. Cys-85 appears to be the main site, and palmitoylation is required for membrane association.

The protein resides in the cytoplasm. The protein localises to the perinuclear region. It localises to the cell membrane. Its subcellular location is the synapse. It is found in the synaptosome. The protein resides in the photoreceptor inner segment. Its function is as follows. t-SNARE involved in the molecular regulation of neurotransmitter release. May play an important role in the synaptic function of specific neuronal systems. Associates with proteins involved in vesicle docking and membrane fusion. Regulates plasma membrane recycling through its interaction with CENPF. Modulates the gating characteristics of the delayed rectifier voltage-dependent potassium channel KCNB1 in pancreatic beta cells. In Pongo abelii (Sumatran orangutan), this protein is Synaptosomal-associated protein 25 (SNAP25).